We begin with the raw amino-acid sequence, 503 residues long: Probable cytosol aminopeptidase (503 aa).

Mn(2+) contacts are provided by Lys-270 and Asp-275. Residue Lys-282 is part of the active site. Mn(2+) is bound by residues Asp-293, Asp-352, and Glu-354. Residue Arg-356 is part of the active site.

This sequence belongs to the peptidase M17 family. Mn(2+) is required as a cofactor.

It is found in the cytoplasm. It catalyses the reaction Release of an N-terminal amino acid, Xaa-|-Yaa-, in which Xaa is preferably Leu, but may be other amino acids including Pro although not Arg or Lys, and Yaa may be Pro. Amino acid amides and methyl esters are also readily hydrolyzed, but rates on arylamides are exceedingly low.. The enzyme catalyses Release of an N-terminal amino acid, preferentially leucine, but not glutamic or aspartic acids.. Functionally, presumably involved in the processing and regular turnover of intracellular proteins. Catalyzes the removal of unsubstituted N-terminal amino acids from various peptides. The protein is Probable cytosol aminopeptidase of Escherichia fergusonii (strain ATCC 35469 / DSM 13698 / CCUG 18766 / IAM 14443 / JCM 21226 / LMG 7866 / NBRC 102419 / NCTC 12128 / CDC 0568-73).